We begin with the raw amino-acid sequence, 170 residues long: Flavin reductase (NADPH) (170 aa).

This sequence belongs to the non-flavoprotein flavin reductase family.

The enzyme catalyses reduced riboflavin + NADP(+) = riboflavin + NADPH + 2 H(+). In terms of biological role, catalyzes the NADH-dependent reduction of FAD to provide FADH2 for the halogenase RebH. The sequence is that of Flavin reductase (NADPH) (rbmH) from Lentzea aerocolonigenes (Lechevalieria aerocolonigenes).